Reading from the N-terminus, the 126-residue chain is Ribonuclease P protein component (126 aa).

The protein belongs to the RnpA family. Consists of a catalytic RNA component (M1 or rnpB) and a protein subunit.

It carries out the reaction Endonucleolytic cleavage of RNA, removing 5'-extranucleotides from tRNA precursor.. Its function is as follows. RNaseP catalyzes the removal of the 5'-leader sequence from pre-tRNA to produce the mature 5'-terminus. It can also cleave other RNA substrates such as 4.5S RNA. The protein component plays an auxiliary but essential role in vivo by binding to the 5'-leader sequence and broadening the substrate specificity of the ribozyme. This Rhodococcus erythropolis (strain PR4 / NBRC 100887) protein is Ribonuclease P protein component.